Here is a 145-residue protein sequence, read N- to C-terminus: uncharacterized protein (145 aa).

The interval tyrosine 95–threonine 119 is disordered.

This is an uncharacterized protein from Treponema pallidum (strain Nichols).